Consider the following 384-residue polypeptide: Carbazole 1,9a-dioxygenase, terminal oxygenase component CarAa (384 aa).

One can recognise a Rieske domain in the interval 29 to 135 (WYPVMFSKEI…VQEAKGCVFI (107 aa)). The [2Fe-2S] cluster site is built by cysteine 69, histidine 71, cysteine 90, and histidine 93.

In terms of assembly, homotrimer. Carbazole 1,9a-dioxygenase complex consists of a terminal oxygenase component CarAa, a ferredoxin reductase component CarAd and a ferredoxin component CarAc. Requires [2Fe-2S] cluster as cofactor.

It catalyses the reaction 9H-carbazole + NADH + O2 + H(+) = 2'-aminobiphenyl-2,3-diol + NAD(+). The catalysed reaction is 9H-carbazole + NADPH + O2 + H(+) = 2'-aminobiphenyl-2,3-diol + NADP(+). Part of the multicomponent carbazole 1,9a-dioxygenase (CARDO), that converts carbazole (CAR) into 2-aminobiphenyl-2,3-diol. Catalyzes the dioxygenation at the angular (C-9a) and adjacent (C-1) positions of carbazole to yield a highly unstable cis-hydrodiol intermediate which is spontaneously converted to 2-aminobiphenyl-2,3-diol. It is also able to attack the angular position adjacent of hetero atom of heterocyclic aromatic compounds such as polychlorinated dibenzo-p-dioxin (DD) and dibenzofuran (DBF). It was also shown that CARDO has the ability to metabolize biphenyl and polycyclic aromatic hydrocarbons, such as naphthalene and phenanthrene. This is Carbazole 1,9a-dioxygenase, terminal oxygenase component CarAa (carAa) from Metapseudomonas resinovorans (Pseudomonas resinovorans).